A 196-amino-acid polypeptide reads, in one-letter code: Signaling threshold-regulating transmembrane adapter 1 (196 aa).

A signal peptide spans 1–24; it reads MNQADPRLRAVCLWTLTSAAMSRG. The Extracellular segment spans residues 25-40; the sequence is DNCTDLLALGIPSITQ. An N-linked (GlcNAc...) asparagine glycan is attached at asparagine 26. The helical transmembrane segment at 41–61 threads the bilayer; sequence AWGLWVLLGAVTLLFLISLAA. At 62–196 the chain is on the cytoplasmic side; it reads HLSQWTRGRS…AYANSQPAAS (135 aa). Phosphoserine occurs at positions 80 and 83. Tyrosine 90 carries the phosphotyrosine modification. The interaction with GRB2 stretch occupies residues 90–93; it reads YGNL. Serine 102 bears the Phosphoserine mark. Phosphotyrosine is present on tyrosine 127. The segment at 132–167 is disordered; the sequence is LRPPQGRIPGPGTPVKYSEVVLDSEPKSQASGPEPE. Position 144 is a phosphothreonine (threonine 144). The tract at residues 146–151 is interaction with PTPN11; sequence VKYSEV. Phosphotyrosine occurs at positions 148 and 169. Positions 169 to 172 are interaction with CSK; sequence YASV. The residue at position 182 (serine 182) is a Phosphoserine. Tyrosine 188 carries the post-translational modification Phosphotyrosine. The interaction with GRB2 stretch occupies residues 188 to 191; the sequence is YANS.

Homodimer; disulfide-linked. When phosphorylated, interacts with PTPN11/SHP2, GRB2 and CSK. Post-translationally, phosphorylated on tyrosines by LCK, FYN or ZAP70 upon TCR activation; which leads to the recruitment of PTPN11, GRB2 and CSK. As to expression, specifically expressed in T- and B-cells. Present in plasma cells but not in germinal center B-cells (at protein level). Expressed in T- and B-cell lymphoma.

The protein localises to the cell membrane. Functionally, negatively regulates TCR (T-cell antigen receptor)-mediated signaling in T-cells. Involved in positive selection of T-cells. This Homo sapiens (Human) protein is Signaling threshold-regulating transmembrane adapter 1 (SIT1).